The sequence spans 984 residues: MORC family CW-type zinc finger protein 1 (984 aa).

Positions 284–353 form a coiled coil; the sequence is AFKDEVKKAE…RELKTARTLS (70 aa). The CW-type zinc finger occupies 477–531; it reads AMGIPFIIQCDLCLKWRVLPSSTNYQEKEFFDIWICANNPNRLENSCHQVECLPS. Zn(2+) is bound by residues cysteine 486, cysteine 489, cysteine 512, and cysteine 523. Coiled coils occupy residues 737–761 and 900–934; these read DVSLKQEKKEIPLLNQEKQELCNDV and EISLGQCENKRKISEDKLKNLRIKLALLLQKLQLG.

Its subcellular location is the nucleus. In terms of biological role, required for spermatogenesis. Essential for de novo DNA methylation and silencing of transposable elements in the male embryonic germ cells. The sequence is that of MORC family CW-type zinc finger protein 1 from Homo sapiens (Human).